A 464-amino-acid polypeptide reads, in one-letter code: Protein VAPYRIN-LIKE (464 aa).

One can recognise an MSP domain in the interval 3–124 (RLVKTEFNEV…RDAVITVILV (122 aa)). 9 ANK repeats span residues 153-182 (NLTN…DVNF), 186-215 (NGKS…RIND), 217-246 (VDFV…ELDV), 252-281 (EMMT…NANA), 285-314 (RRWT…VKYA), 318-347 (NGKT…LLQA), 349-368 (RVDD…EVNR), 372-401 (NGWT…EVDS), and 405-435 (AGYT…QTNL).

In terms of tissue distribution, expressed in roots.

Its subcellular location is the cytoplasm. The protein resides in the nucleus. It localises to the cell membrane. Its function is as follows. May be involved in arbuscular mycorrhizal (AM) symbiosis with AM fungi and in nitrogen-fixing rhizobial bacteria symbiosis leading to the formation of root nodules. This is Protein VAPYRIN-LIKE from Medicago truncatula (Barrel medic).